Here is a 504-residue protein sequence, read N- to C-terminus: Aspartyl/glutamyl-tRNA(Asn/Gln) amidotransferase subunit B (504 aa).

It belongs to the GatB/GatE family. GatB subfamily. As to quaternary structure, heterotrimer of A, B and C subunits.

It carries out the reaction L-glutamyl-tRNA(Gln) + L-glutamine + ATP + H2O = L-glutaminyl-tRNA(Gln) + L-glutamate + ADP + phosphate + H(+). The catalysed reaction is L-aspartyl-tRNA(Asn) + L-glutamine + ATP + H2O = L-asparaginyl-tRNA(Asn) + L-glutamate + ADP + phosphate + 2 H(+). Functionally, allows the formation of correctly charged Asn-tRNA(Asn) or Gln-tRNA(Gln) through the transamidation of misacylated Asp-tRNA(Asn) or Glu-tRNA(Gln) in organisms which lack either or both of asparaginyl-tRNA or glutaminyl-tRNA synthetases. The reaction takes place in the presence of glutamine and ATP through an activated phospho-Asp-tRNA(Asn) or phospho-Glu-tRNA(Gln). This chain is Aspartyl/glutamyl-tRNA(Asn/Gln) amidotransferase subunit B, found in Rhodococcus opacus (strain B4).